The sequence spans 38 residues: Bacteriocin curvaticin FS47 (38 aa).

The protein resides in the secreted. In terms of biological role, bacteriocin active against Listeria monocytogenes, Pediococcus, Enterococcus, Lactobacilli and Bacilli. This chain is Bacteriocin curvaticin FS47, found in Latilactobacillus curvatus (Lactobacillus curvatus).